We begin with the raw amino-acid sequence, 503 residues long: Trehalose-6-phosphate synthase (503 aa).

Arg22 is a D-glucose 6-phosphate binding site. 42–43 (GG) contacts UDP-alpha-D-glucose. Residues Tyr94 and Asp148 each contribute to the D-glucose 6-phosphate site. Positions 290 and 295 each coordinate UDP-alpha-D-glucose. Residue Arg328 participates in D-glucose 6-phosphate binding. UDP-alpha-D-glucose is bound at residue 393-397 (LVAKE). Positions 481–503 (GETGDSGVTGESTPAPESDSGSF) are disordered.

The protein belongs to the glycosyltransferase 20 family. Homotetramer.

It carries out the reaction ADP-alpha-D-glucose + D-glucose 6-phosphate = alpha,alpha-trehalose 6-phosphate + ADP + H(+). The enzyme catalyses CDP-alpha-D-glucose + D-glucose 6-phosphate = alpha,alpha-trehalose 6-phosphate + CDP + H(+). It catalyses the reaction GDP-alpha-D-glucose + D-glucose 6-phosphate = alpha,alpha-trehalose 6-phosphate + GDP + H(+). The catalysed reaction is TDP-alpha-D-glucose + D-glucose 6-phosphate = 5-methyl-UDP + alpha,alpha-trehalose 6-phosphate + H(+). It carries out the reaction D-glucose 6-phosphate + UDP-alpha-D-glucose = alpha,alpha-trehalose 6-phosphate + UDP + H(+). It participates in glycan biosynthesis; trehalose biosynthesis. Its activity is regulated as follows. Stimulated by the polynucleotide FII (physiological activator), and by chondroitin sulfate (CS) and heparin. Activation by the polyanion is inhibited by high salt concentration as well as by high concentrations of mononucleoside phosphates. Functionally, involved in the production of glycogen and alpha-glucan via the TreS-Pep2 branch involved in the biosynthesis of maltose-1-phosphate (M1P), and probably in the osmoprotection via the biosynthesis of trehalose. Catalyzes the transfer of glucose from UDP-glucose (UDP-Glc) to glucose-6-phosphate (Glc-6-P) to form trehalose-6-phosphate. ADP-Glc, CDP-Glc, GDP-Glc and TDP-Glc are also glucosyl donors, however, when the pyrimidine sugar nucleotides (CDP-Glc, TDP-Glc and UDP-Glc) are used as substrates, there is an absolute requirement for a high molecular weight polyanion for activity. This chain is Trehalose-6-phosphate synthase, found in Mycolicibacterium smegmatis (strain ATCC 700084 / mc(2)155) (Mycobacterium smegmatis).